The following is a 161-amino-acid chain: Ribonuclease H (161 aa).

The 145-residue stretch at 5 to 149 (EKLAIAAATD…VDAIAVAFSK (145 aa)) folds into the RNase H type-1 domain. Mg(2+) contacts are provided by aspartate 14, glutamate 53, aspartate 78, and aspartate 141.

It belongs to the RNase H family. As to quaternary structure, monomer. Mg(2+) is required as a cofactor.

The protein resides in the cytoplasm. The enzyme catalyses Endonucleolytic cleavage to 5'-phosphomonoester.. Endonuclease that specifically degrades the RNA of RNA-DNA hybrids. In Prochlorococcus marinus (strain NATL1A), this protein is Ribonuclease H.